We begin with the raw amino-acid sequence, 159 residues long: MSDSKQYIMTAEGVKKLEEELEYLKTVKRREITEKIKVALSYGDLSENSEYDEAKNEQAFVEGRIVQLENMLRNANVVDESEISLDAVSVGSIVKVKDYDFDEIIDFHIVGSAEADPMENKISNESPVGSALIGKKVGDVINVPVPDGISKFEILEIRV.

Positions 14 to 76 form a coiled coil; sequence VKKLEEELEY…QLENMLRNAN (63 aa).

The protein belongs to the GreA/GreB family.

Functionally, necessary for efficient RNA polymerase transcription elongation past template-encoded arresting sites. The arresting sites in DNA have the property of trapping a certain fraction of elongating RNA polymerases that pass through, resulting in locked ternary complexes. Cleavage of the nascent transcript by cleavage factors such as GreA or GreB allows the resumption of elongation from the new 3'terminus. GreA releases sequences of 2 to 3 nucleotides. The protein is Transcription elongation factor GreA of Clostridium novyi (strain NT).